A 380-amino-acid polypeptide reads, in one-letter code: Cytochrome b (380 aa).

The next 4 helical transmembrane spans lie at 34-54 (FGSL…LLAT), 78-99 (WLIR…YLHI), 114-134 (WNTG…GYVL), and 179-199 (FFAL…IHLT). Heme b contacts are provided by His-84 and His-98. Heme b-binding residues include His-183 and His-197. Position 202 (His-202) interacts with a ubiquinone. The next 4 membrane-spanning stretches (helical) occupy residues 227-247 (LKDI…ALFS), 289-309 (LGGV…PLLH), 321-341 (FSQF…WVGS), and 348-368 (FIII…LLFP).

This sequence belongs to the cytochrome b family. In terms of assembly, the cytochrome bc1 complex contains 11 subunits: 3 respiratory subunits (MT-CYB, CYC1 and UQCRFS1), 2 core proteins (UQCRC1 and UQCRC2) and 6 low-molecular weight proteins (UQCRH/QCR6, UQCRB/QCR7, UQCRQ/QCR8, UQCR10/QCR9, UQCR11/QCR10 and a cleavage product of UQCRFS1). This cytochrome bc1 complex then forms a dimer. Requires heme b as cofactor.

It is found in the mitochondrion inner membrane. Functionally, component of the ubiquinol-cytochrome c reductase complex (complex III or cytochrome b-c1 complex) that is part of the mitochondrial respiratory chain. The b-c1 complex mediates electron transfer from ubiquinol to cytochrome c. Contributes to the generation of a proton gradient across the mitochondrial membrane that is then used for ATP synthesis. This chain is Cytochrome b (MT-CYB), found in Alle alle (Dovekie).